Reading from the N-terminus, the 182-residue chain is Crossover junction endodeoxyribonuclease RuvC (182 aa).

Residues D7, E69, and D141 contribute to the active site. 3 residues coordinate Mg(2+): D7, E69, and D141.

This sequence belongs to the RuvC family. In terms of assembly, homodimer which binds Holliday junction (HJ) DNA. The HJ becomes 2-fold symmetrical on binding to RuvC with unstacked arms; it has a different conformation from HJ DNA in complex with RuvA. In the full resolvosome a probable DNA-RuvA(4)-RuvB(12)-RuvC(2) complex forms which resolves the HJ. Requires Mg(2+) as cofactor.

Its subcellular location is the cytoplasm. It carries out the reaction Endonucleolytic cleavage at a junction such as a reciprocal single-stranded crossover between two homologous DNA duplexes (Holliday junction).. In terms of biological role, the RuvA-RuvB-RuvC complex processes Holliday junction (HJ) DNA during genetic recombination and DNA repair. Endonuclease that resolves HJ intermediates. Cleaves cruciform DNA by making single-stranded nicks across the HJ at symmetrical positions within the homologous arms, yielding a 5'-phosphate and a 3'-hydroxyl group; requires a central core of homology in the junction. The consensus cleavage sequence is 5'-(A/T)TT(C/G)-3'. Cleavage occurs on the 3'-side of the TT dinucleotide at the point of strand exchange. HJ branch migration catalyzed by RuvA-RuvB allows RuvC to scan DNA until it finds its consensus sequence, where it cleaves and resolves the cruciform DNA. This is Crossover junction endodeoxyribonuclease RuvC from Delftia acidovorans (strain DSM 14801 / SPH-1).